The chain runs to 254 residues: MYQPLLLLPLLLTSAFATPHDPTTHQALEKRASFPIPSSKGSVTYSSPKTISGTFDGGLKTYGRGVKCTGQKEGGEKDAVFVLEDGATLKNAIIGADQIEGVYCKGSCTIQNVWWTDVCEDALSLKGTGSGTHRIIGGGARNADDKVIQHNSGGKVIIQDFTVQNFGKLYRACGNCSKQFKRTVEISGVKASSGKALVGINSNYGDTATISGCASSVKEICVEYEGTDNNKKEPAKKSSGPSNACKYKEPLASC.

A signal peptide spans 1–17 (MYQPLLLLPLLLTSAFA). Asn-175 carries N-linked (GlcNAc...) asparagine glycosylation. Residues 228–254 (DNNKKEPAKKSSGPSNACKYKEPLASC) are disordered.

It belongs to the polysaccharide lyase 3 family. The cofactor is Ca(2+).

Its subcellular location is the secreted. It catalyses the reaction Eliminative cleavage of (1-&gt;4)-alpha-D-galacturonan to give oligosaccharides with 4-deoxy-alpha-D-galact-4-enuronosyl groups at their non-reducing ends.. In terms of biological role, pectinolytic enzyme consist of four classes of enzymes: pectin lyase, polygalacturonase, pectin methylesterase and rhamnogalacturonase. Among pectinolytic enzymes, pectin lyase is the most important in depolymerization of pectin, since it cleaves internal glycosidic bonds of highly methylated pectins. Favors pectate, the anion, over pectin, the methyl ester. The sequence is that of Probable pectate lyase E (plyE) from Aspergillus fumigatus (strain ATCC MYA-4609 / CBS 101355 / FGSC A1100 / Af293) (Neosartorya fumigata).